Consider the following 168-residue polypeptide: Leukotoxin-activating lysine-acyltransferase LtxC (168 aa).

Active-site residues include His23 and Asp92.

This sequence belongs to the RTX toxin acyltransferase family.

It is found in the cytoplasm. It carries out the reaction a fatty acyl-[ACP] + L-lysyl-[protein] = N(6)-(fatty acyl)-L-lysyl-[protein] + holo-[ACP] + H(+). Functionally, required for full activity and modification of the LtxA leukotoxin. Involved in fatty acid modification of the protoxin at two internal lysine residues, thereby converting it to the active toxin. This chain is Leukotoxin-activating lysine-acyltransferase LtxC, found in Aggregatibacter actinomycetemcomitans (Actinobacillus actinomycetemcomitans).